The sequence spans 146 residues: Gene 19.2 protein (146 aa).

The chain is Gene 19.2 protein (19.2) from Escherichia coli (Bacteriophage T3).